A 332-amino-acid polypeptide reads, in one-letter code: 2,3-diketo-L-gulonate reductase (332 aa).

Histidine 44 (proton donor) is an active-site residue. NAD(+) is bound by residues 168–174, 224–225, and 304–306; these read ITMVDMS, WK, and GHE.

This sequence belongs to the LDH2/MDH2 oxidoreductase family. DlgD subfamily. As to quaternary structure, homodimer.

Its subcellular location is the cytoplasm. The enzyme catalyses 3-dehydro-L-gulonate + NAD(+) = 2,3-dioxo-L-gulonate + NADH + H(+). It catalyses the reaction 3-dehydro-L-gulonate + NADP(+) = 2,3-dioxo-L-gulonate + NADPH + H(+). In terms of biological role, catalyzes the reduction of 2,3-diketo-L-gulonate in the presence of NADH, to form 3-keto-L-gulonate. This Escherichia coli (strain K12 / MC4100 / BW2952) protein is 2,3-diketo-L-gulonate reductase.